We begin with the raw amino-acid sequence, 216 residues long: Phosducin-like protein 3 (216 aa).

A coiled-coil region spans residues 13–59 (AKTIEQQLDQQLDRLDNLDSDDLKVLREQRLREMKDLNNKKQEWLRN). Positions 29 to 163 (NLDSDDLKVL…DLGNCDDFAT (135 aa)) constitute a Phosducin domain.

Belongs to the phosducin family. In terms of tissue distribution, highly expressed in germline cells of the testis from the spermatogonia stage until the early spermatid stage but is no longer observed in late-stage spermatids in the distal end of the testis.

The enzyme catalyses [thioredoxin]-dithiol + NADP(+) = [thioredoxin]-disulfide + NADPH + H(+). Has redox activity with thioredoxin. Required for male fertility and maturation of sperm past the canoe stage during spermiogenesis. In Drosophila melanogaster (Fruit fly), this protein is Phosducin-like protein 3.